We begin with the raw amino-acid sequence, 566 residues long: Proline--tRNA ligase (566 aa).

The protein belongs to the class-II aminoacyl-tRNA synthetase family. ProS type 1 subfamily. Homodimer.

Its subcellular location is the cytoplasm. It carries out the reaction tRNA(Pro) + L-proline + ATP = L-prolyl-tRNA(Pro) + AMP + diphosphate. Catalyzes the attachment of proline to tRNA(Pro) in a two-step reaction: proline is first activated by ATP to form Pro-AMP and then transferred to the acceptor end of tRNA(Pro). As ProRS can inadvertently accommodate and process non-cognate amino acids such as alanine and cysteine, to avoid such errors it has two additional distinct editing activities against alanine. One activity is designated as 'pretransfer' editing and involves the tRNA(Pro)-independent hydrolysis of activated Ala-AMP. The other activity is designated 'posttransfer' editing and involves deacylation of mischarged Ala-tRNA(Pro). The misacylated Cys-tRNA(Pro) is not edited by ProRS. This chain is Proline--tRNA ligase, found in Bacillus cereus (strain AH187).